The sequence spans 392 residues: MLLILLSVALLALSSAQNLNEDVSQEESPSLIAGNPQGPSPQGGNKPQGPPPPPGKPQGPPPQGGNKPQGPPPPGKPQGPPPQGDKSRSPRSPPGKPQGPPPQGGNQPQGPPPPPGKPQGPPPQGGNKPQGPPPPGKPQGPPPQGDKSQSPRSPPGKPQGPPPQGGNQPQGPPPPPGKPQGPPPQGGNKPQGPPPPGKPQGPPPQGDKSQSPRSPPGKPQGPPPQGGNQPQGPPPPPGKPQGPPQQGGNRPQGPPPPGKPQGPPPQGDKSRSPQSPPGKPQGPPPQGGNQPQGPPPPPGKPQGPPPQGGNKPQGPPPPGKPQGPPAQGGSKSQSARSPPGKPQGPPQQEGNNPQGPPPPAGGNPQQPQAPPAGQPQGPPRPPQGGRPSRPPQ.

Positions 1–16 (MLLILLSVALLALSSA) are cleaved as a signal peptide. Glutamine 17 is subject to Pyrrolidone carboxylic acid. Residues 19–28 (LNEDVSQEES) are compositionally biased toward polar residues. Residues 19 to 392 (LNEDVSQEES…QGGRPSRPPQ (374 aa)) are disordered. The span at 34 to 47 (GNPQGPSPQGGNKP) shows a compositional bias: low complexity. Serine 40 is subject to Phosphoserine; alternate. The O-linked (Hex) serine; alternate glycan is linked to serine 40. The segment covering 48 to 83 (QGPPPPPGKPQGPPPQGGNKPQGPPPPGKPQGPPPQ) has biased composition (pro residues). 15 repeat units span residues 53–72 (PPGK…QGPP), 73–92 (PPGK…SPRS), 93–112 (PPGK…QGPP), 114–133 (PPGK…QGPP), 134–153 (PPGK…SPRS), 154–173 (PPGK…QGPP), 175–194 (PPGK…QGPP), 195–214 (PPGK…SPRS), 215–234 (PPGK…QGPP), 236–255 (PPGK…QGPP), 256–275 (PPGK…SPQS), 276–295 (PPGK…QGPP), 297–316 (PPGK…QGPP), 317–336 (PPGK…QSAR), and 338–357 (PPGK…QGPP). Residues 53 to 357 (PPGKPQGPPP…QEGNNPQGPP (305 aa)) are 15 X 20 AA approximate tandem repeats of P-P-G-K-P-Q-G-P-P-[PAQ]-Q-[GE]-[GD]-[NKS]-[KSQRN]-[PRQS]-[QS] [GPS]-[PQAR]-[PSR]. An O-linked (HexNAc...) serine glycan is attached at serine 87. Residues 91 to 144 (RSPPGKPQGPPPQGGNQPQGPPPPPGKPQGPPPQGGNKPQGPPPPGKPQGPPPQ) are compositionally biased toward pro residues. Residue serine 92 is modified to Phosphoserine. Serine 150 carries the phosphoserine; alternate modification. O-linked (Hex) serine; alternate glycosylation occurs at serine 150. Composition is skewed to pro residues over residues 152-205 (RSPP…PPPQ), 213-243 (RSPP…PQGP), 252-266 (QGPP…PPPQ), and 274-324 (QSPP…PQGP). Positions 325-334 (PAQGGSKSQS) are enriched in low complexity. A glycan (O-linked (HexNAc...) serine) is linked at serine 330. The segment covering 354–392 (QGPPPPAGGNPQQPQAPPAGQPQGPPRPPQGGRPSRPPQ) has biased composition (pro residues).

Post-translationally, O-glycosylated. O-glycosylation on Ser-87 is prevalent in head and neck cancer patients. O-Glycosylation on Ser-330 has a 5 times prevalence in head and neck cancers. Proteolytically cleaved at the tripeptide Xaa-Pro-Gln, where Xaa in the P(3) position is mostly lysine. The endoprotease may be of microbial origin. In terms of processing, pyroglutamate formation occurs on terminal Gln residues of cleaved peptides. Besides on the N-terminal of mature PBR1, pyroglutamate formation found on at least Gln-58.

The protein localises to the secreted. The polypeptide is Basic salivary proline-rich protein 1 (PRB1) (Homo sapiens (Human)).